The sequence spans 385 residues: Phosphate acyltransferase (385 aa).

Residues 1–17 show a composition bias toward low complexity; the sequence is MAAGTSIGTTPGGSTSP. Residues 1 to 28 form a disordered region; that stretch reads MAAGTSIGTTPGGSTSPETPPEHGLTGT.

Belongs to the PlsX family. In terms of assembly, homodimer. Probably interacts with PlsY.

It is found in the cytoplasm. It catalyses the reaction a fatty acyl-[ACP] + phosphate = an acyl phosphate + holo-[ACP]. The protein operates within lipid metabolism; phospholipid metabolism. Its function is as follows. Catalyzes the reversible formation of acyl-phosphate (acyl-PO(4)) from acyl-[acyl-carrier-protein] (acyl-ACP). This enzyme utilizes acyl-ACP as fatty acyl donor, but not acyl-CoA. This is Phosphate acyltransferase from Dinoroseobacter shibae (strain DSM 16493 / NCIMB 14021 / DFL 12).